The primary structure comprises 134 residues: Small ribosomal subunit protein uS11 (134 aa).

Belongs to the universal ribosomal protein uS11 family. In terms of assembly, part of the 30S ribosomal subunit. Interacts with proteins S7 and S18. Binds to IF-3.

Functionally, located on the platform of the 30S subunit, it bridges several disparate RNA helices of the 16S rRNA. Forms part of the Shine-Dalgarno cleft in the 70S ribosome. This is Small ribosomal subunit protein uS11 from Polaromonas naphthalenivorans (strain CJ2).